The sequence spans 195 residues: 7-methyl-GTP pyrophosphatase (195 aa).

The active-site Proton acceptor is the Asp70.

It belongs to the Maf family. YceF subfamily. A divalent metal cation serves as cofactor.

It is found in the cytoplasm. It catalyses the reaction N(7)-methyl-GTP + H2O = N(7)-methyl-GMP + diphosphate + H(+). Nucleoside triphosphate pyrophosphatase that hydrolyzes 7-methyl-GTP (m(7)GTP). May have a dual role in cell division arrest and in preventing the incorporation of modified nucleotides into cellular nucleic acids. The polypeptide is 7-methyl-GTP pyrophosphatase (Shewanella sp. (strain MR-7)).